Reading from the N-terminus, the 438-residue chain is Transposon Ty2-F Gag polyprotein (438 aa).

Composition is skewed to polar residues over residues 1–11 (MESQQLHQNPH), 19–39 (ASVTSKEVPSNQDPLAVSASN), and 49–60 (KVNSQQETTPGT). Disordered stretches follow at residues 1 to 86 (MESQ…GQYQ), 366 to 397 (VSRTSPNTTNTKVTTRNYHRTNSSKPRAAKAH), and 419 to 438 (SSQYLSDDNELSLRPATERI). Residues 295–397 (ENNINVSDRL…SSKPRAAKAH (103 aa)) are RNA-binding. The segment covering 369 to 381 (TSPNTTNTKVTTR) has biased composition (low complexity).

As to quaternary structure, homotrimer.

The protein localises to the cytoplasm. Capsid protein (CA) is the structural component of the virus-like particle (VLP), forming the shell that encapsulates the retrotransposons dimeric RNA genome. The particles are assembled from trimer-clustered units and there are holes in the capsid shells that allow for the diffusion of macromolecules. CA also has nucleocapsid-like chaperone activity, promoting primer tRNA(i)-Met annealing to the multipartite primer-binding site (PBS), dimerization of Ty2 RNA and initiation of reverse transcription. This chain is Transposon Ty2-F Gag polyprotein (TY2A-F), found in Saccharomyces cerevisiae (strain ATCC 204508 / S288c) (Baker's yeast).